A 390-amino-acid chain; its full sequence is MKPIIYIKYGELTLKGKNRTQFIKVLVHNIKQILIQYQNLTYCVGYDNLKIINLENYNLKQIIDDLKEVYGIAFICIAYQVDKELSEIQLACKEFINDYEQTFKIEARRSDKSFKYNSMEIKQMCAAYLLQNSPLLKVDVHRPQLLINIEIKYDCAIVYGHKIMGAKGLPVGINGKALVLLSGGIDSPVASRLIMKRGISIDFITFITPPHTSQKALDKTIALAKQITLDNKLTKANLYVCNFTKLQDEIAHISKESYRITLMRRYFMRIAKRLAISVKANALVTGEALGQVASQTLNSMQTISSVLDNFLVLRPLIAYDKEEIISLAKRFNTYELSILPYDDSCSLFAPKNPTTNPNVQTAAKLEEESLVLDAIYELVYTKEITKINLS.

The 103-residue stretch at 60 to 162 (KQIIDDLKEV…YDCAIVYGHK (103 aa)) folds into the THUMP domain. ATP contacts are provided by residues 180–181 (LL), 205–206 (TF), Arg-264, Gly-286, and Gln-295.

The protein belongs to the ThiI family.

It localises to the cytoplasm. It carries out the reaction [ThiI sulfur-carrier protein]-S-sulfanyl-L-cysteine + a uridine in tRNA + 2 reduced [2Fe-2S]-[ferredoxin] + ATP + H(+) = [ThiI sulfur-carrier protein]-L-cysteine + a 4-thiouridine in tRNA + 2 oxidized [2Fe-2S]-[ferredoxin] + AMP + diphosphate. The catalysed reaction is [ThiS sulfur-carrier protein]-C-terminal Gly-Gly-AMP + S-sulfanyl-L-cysteinyl-[cysteine desulfurase] + AH2 = [ThiS sulfur-carrier protein]-C-terminal-Gly-aminoethanethioate + L-cysteinyl-[cysteine desulfurase] + A + AMP + 2 H(+). Its pathway is cofactor biosynthesis; thiamine diphosphate biosynthesis. Its function is as follows. Catalyzes the ATP-dependent transfer of a sulfur to tRNA to produce 4-thiouridine in position 8 of tRNAs, which functions as a near-UV photosensor. Also catalyzes the transfer of sulfur to the sulfur carrier protein ThiS, forming ThiS-thiocarboxylate. This is a step in the synthesis of thiazole, in the thiamine biosynthesis pathway. The sulfur is donated as persulfide by IscS. The polypeptide is Probable tRNA sulfurtransferase (Ureaplasma parvum serovar 3 (strain ATCC 27815 / 27 / NCTC 11736)).